A 423-amino-acid polypeptide reads, in one-letter code: UPF0229 protein PLES_05841 (423 aa).

A disordered region spans residues 84–107; that stretch reads AGEHIARPSGGGGGRGGGKASNSG. Positions 92–102 are enriched in gly residues; that stretch reads SGGGGGRGGGK.

This sequence belongs to the UPF0229 family.

The sequence is that of UPF0229 protein PLES_05841 from Pseudomonas aeruginosa (strain LESB58).